Reading from the N-terminus, the 358-residue chain is Peptide chain release factor 1 (358 aa).

An N5-methylglutamine modification is found at Gln234.

Belongs to the prokaryotic/mitochondrial release factor family. Post-translationally, methylated by PrmC. Methylation increases the termination efficiency of RF1.

It is found in the cytoplasm. In terms of biological role, peptide chain release factor 1 directs the termination of translation in response to the peptide chain termination codons UAG and UAA. The chain is Peptide chain release factor 1 from Leifsonia xyli subsp. xyli (strain CTCB07).